Reading from the N-terminus, the 684-residue chain is Methionine--tRNA ligase (684 aa).

Residues 14–24 carry the 'HIGH' region motif; it reads PYANGAIHLGH. The Zn(2+) site is built by Cys145, Cys148, Cys158, and Cys161. Positions 330-334 match the 'KMSKS' region motif; that stretch reads KMSKS. ATP is bound at residue Lys333. The tRNA-binding domain occupies 582-684; it reads DFAKLDLRVA…CGIRPGMQVK (103 aa).

It belongs to the class-I aminoacyl-tRNA synthetase family. MetG type 1 subfamily. In terms of assembly, homodimer. Requires Zn(2+) as cofactor.

The protein resides in the cytoplasm. The catalysed reaction is tRNA(Met) + L-methionine + ATP = L-methionyl-tRNA(Met) + AMP + diphosphate. Functionally, is required not only for elongation of protein synthesis but also for the initiation of all mRNA translation through initiator tRNA(fMet) aminoacylation. The polypeptide is Methionine--tRNA ligase (Haemophilus ducreyi (strain 35000HP / ATCC 700724)).